A 906-amino-acid chain; its full sequence is Nuclear factor NF-kappa-B p100 subunit (906 aa).

The 190-residue stretch at 34-223 folds into the RHD domain; the sequence is AVGPYLVIIE…DPIHDSKSPG (190 aa). The Nuclear localization signal motif lies at 336–340; sequence RNRKK. The GRR stretch occupies residues 345-374; it reads FPQHFGGGSHMGGAGGAGGFGAGGGGNLSF. ANK repeat units follow at residues 472–501, 511–540, 544–573, 582–611, 616–646, and 650–679; these read NGDTPLHLAIIHEQTAVIKQLIEVVVSIPS, LQQTPLHLAVITKQPQVVQLLLEAHANPTL, YGNSLLHLALQAADEEMLRMLLAHLASATP, QGLLPVHLAVKAKSPACLDLLVRKGADVNG, GGRTPLHLAVEMENLNMATHLVKKLGANVNS, and AGNTPLHLAAGLGSPTLTKLLLKAGADVQR. Disordered regions lie at residues 677–734 and 857–906; these read VQRE…GPRQ and EPLE…QQVH. Residues 684 to 695 show a composition bias toward low complexity; sequence PVSPSSVRVPSS. The span at 697–708 shows a compositional bias: acidic residues; that stretch reads TDGDPEEQEQEQ. A Death domain is found at 771 to 857; it reads RNHLLSLDTD…GAVRMLRKPE (87 aa).

Component of the NF-kappa-B RelB-p52 complex. While translation occurs, the particular unfolded structure after the GRR repeat promotes the generation of p52 making it an acceptable substrate for the proteasome. This process is known as cotranslational processing. The processed form is active and the unprocessed form acts as an inhibitor (I kappa B-like), being able to form cytosolic complexes with NF-kappa B, trapping it in the cytoplasm. Complete folding of the region downstream of the GRR repeat precludes processing. Post-translationally, constitutive processing is tightly suppressed by its C-terminal processing inhibitory domain, named PID, which contains the death domain.

Its subcellular location is the nucleus. The protein resides in the cytoplasm. Functionally, NF-kappa-B is a pleiotropic transcription factor present in almost all cell types and is the endpoint of a series of signal transduction events that are initiated by a vast array of stimuli related to many biological processes such as inflammation, immunity, differentiation, cell growth, tumorigenesis and apoptosis. NF-kappa-B is a homo- or heterodimeric complex formed by the Rel-like domain-containing proteins RELA/p65, RELB, NFKB1/p105, NFKB1/p50, REL and NFKB2/p52. The dimers bind at kappa-B sites in the DNA of their target genes and the individual dimers have distinct preferences for different kappa-B sites that they can bind with distinguishable affinity and specificity. Different dimer combinations act as transcriptional activators or repressors, respectively. NF-kappa-B is controlled by various mechanisms of post-translational modification and subcellular compartmentalization as well as by interactions with other cofactors or corepressors. NF-kappa-B complexes are held in the cytoplasm in an inactive state complexed with members of the NF-kappa-B inhibitor (I-kappa-B) family. In a conventional activation pathway, I-kappa-B is phosphorylated by I-kappa-B kinases (IKKs) in response to different activators, subsequently degraded thus liberating the active NF-kappa-B complex which translocates to the nucleus. In a non-canonical activation pathway, the MAP3K14-activated CHUK/IKKA homodimer phosphorylates NFKB2/p100 associated with RelB, inducing its proteolytic processing to NFKB2/p52 and the formation of NF-kappa-B RelB-p52 complexes. The NF-kappa-B heterodimeric RelB-p52 complex is a transcriptional activator. NFKB2 appears to have dual functions such as cytoplasmic retention of attached NF-kappa-B proteins by p100 and generation of p52 by a cotranslational processing. The proteasome-mediated process ensures the production of both p52 and p100 and preserves their independent function. p52 binds to the kappa-B consensus sequence 5'-GGRNNYYCC-3', located in the enhancer region of genes involved in immune response and acute phase reactions. In concert with RELB, may play a role in the regulation of the circadian clock. The sequence is that of Nuclear factor NF-kappa-B p100 subunit (NFKB2) from Gallus gallus (Chicken).